We begin with the raw amino-acid sequence, 139 residues long: Large ribosomal subunit protein uL16 (139 aa).

A compositionally biased stretch (basic residues) spans 1–17 (MLIPRRTKHRKQHHPRR). Residues 1–24 (MLIPRRTKHRKQHHPRRTGAASGG) are disordered.

This sequence belongs to the universal ribosomal protein uL16 family. In terms of assembly, part of the 50S ribosomal subunit.

Its function is as follows. Binds 23S rRNA and is also seen to make contacts with the A and possibly P site tRNAs. The chain is Large ribosomal subunit protein uL16 from Beutenbergia cavernae (strain ATCC BAA-8 / DSM 12333 / CCUG 43141 / JCM 11478 / NBRC 16432 / NCIMB 13614 / HKI 0122).